An 89-amino-acid polypeptide reads, in one-letter code: Small ribosomal subunit protein bS20 (89 aa).

The tract at residues 1 to 20 (MANHKSAEKRARQTIKRTER) is disordered.

The protein belongs to the bacterial ribosomal protein bS20 family.

In terms of biological role, binds directly to 16S ribosomal RNA. In Campylobacter concisus (strain 13826), this protein is Small ribosomal subunit protein bS20.